Consider the following 606-residue polypeptide: NADH-ubiquinone oxidoreductase chain 5 (606 aa).

16 consecutive transmembrane segments (helical) span residues 1 to 21 (MNLFTSFTLLTLLILTTPIMM), 35 to 55 (YVKNIVFCAFITSLVPAMVYL), 87 to 107 (LMFMPVALFITWSIMEFSMWY), 114 to 134 (INQFFKYLLLFLITMLILVTA), 140 to 160 (LFIGWEGVGIMSFLLIGWWFG), 171 to 191 (AILYNRIGDIGLLASMAWFLS), 211 to 233 (FPLMGLVLAAAGKSAQFGLHPWL), 241 to 261 (TPVSALLHSSTMVVAGIFLLV), 272 to 292 (LIQTVTLCLGAITTLFTAICA), 301 to 320 (IIAFSTSSQLGLMMVTIGLN), 325 to 347 (AFLHICTHAFFKAMLFLCSGSII), 366 to 386 (LPFTTTALIIGCLALTGMPFL), 413 to 433 (LIATSLTAVYSTRIIFFALLG), 457 to 477 (LLVGSIFAGFILSNSIPPMTT), 482 to 502 (MPLHLKLTALAMTTLGFIIAF), and 582 to 602 (GLIKLYFLSFLITITLSMILF).

It belongs to the complex I subunit 5 family. In terms of assembly, core subunit of respiratory chain NADH dehydrogenase (Complex I) which is composed of 45 different subunits.

It is found in the mitochondrion inner membrane. It carries out the reaction a ubiquinone + NADH + 5 H(+)(in) = a ubiquinol + NAD(+) + 4 H(+)(out). Its function is as follows. Core subunit of the mitochondrial membrane respiratory chain NADH dehydrogenase (Complex I) which catalyzes electron transfer from NADH through the respiratory chain, using ubiquinone as an electron acceptor. Essential for the catalytic activity and assembly of complex I. The protein is NADH-ubiquinone oxidoreductase chain 5 (MT-ND5) of Balaenoptera physalus (Fin whale).